The following is a 278-amino-acid chain: Maltodextrin transport system permease protein MdxG (278 aa).

Helical transmembrane passes span 12–32 (ICTY…LLIT), 74–94 (TLVI…LAGY), 108–128 (LIFF…AFYV), 131–151 (MLIG…GGGI), 183–203 (IFAS…ALWA), and 242–262 (VALF…LFFF). Residues 71-263 (YSNTLVIALS…LPICVLFFFL (193 aa)) form the ABC transmembrane type-1 domain.

This sequence belongs to the binding-protein-dependent transport system permease family. MalFG subfamily. As to quaternary structure, the complex is composed of two ATP-binding proteins (MsmX), two transmembrane proteins (MdxF and MdxG) and a solute-binding protein (MdxE).

It localises to the cell membrane. Its function is as follows. Part of the ABC transporter complex involved in maltodextrin import. Probably responsible for the translocation of the substrate across the membrane. The polypeptide is Maltodextrin transport system permease protein MdxG (mdxG) (Bacillus subtilis (strain 168)).